We begin with the raw amino-acid sequence, 277 residues long: Large ribosomal subunit protein uL2 (277 aa).

The disordered stretch occupies residues 222–277 (GVTMNPVDHPHGGGEGRTSGGRNPVTPWGFPTKGKKTRNNKATDKFIVSSRHKRKK).

The protein belongs to the universal ribosomal protein uL2 family. Part of the 50S ribosomal subunit. Forms a bridge to the 30S subunit in the 70S ribosome.

One of the primary rRNA binding proteins. Required for association of the 30S and 50S subunits to form the 70S ribosome, for tRNA binding and peptide bond formation. It has been suggested to have peptidyltransferase activity; this is somewhat controversial. Makes several contacts with the 16S rRNA in the 70S ribosome. The polypeptide is Large ribosomal subunit protein uL2 (Xanthobacter autotrophicus (strain ATCC BAA-1158 / Py2)).